Here is a 163-residue protein sequence, read N- to C-terminus: Regulator of chromosome segregation (163 aa).

In terms of assembly, interacts with CpsD and ParB.

It is found in the cytoplasm. Its subcellular location is the nucleoid. The protein resides in the cell membrane. Required for cell division and chromosome segregation. Binds to DNA and is involved in segregating the origin of replication (oriC) region to new daughter cells. When the nucleoid is not properly segregated, involved in blocking the cell division to protect the nucleoid against premature truncation by the newly forming septum, a function which is dependent on CpsD and its autophosphorylation level. This is Regulator of chromosome segregation from Streptococcus pneumoniae serotype 2 (strain D39 / NCTC 7466).